Consider the following 682-residue polypeptide: Methionine--tRNA ligase (682 aa).

Residues 15–25 carry the 'HIGH' region motif; the sequence is PYANGAIHLGH. Zn(2+)-binding residues include cysteine 146, cysteine 149, cysteine 159, and cysteine 162. Positions 331-335 match the 'KMSKS' region motif; sequence KMSKS. Lysine 334 serves as a coordination point for ATP. Residues 580 to 682 form the tRNA-binding domain; sequence DFAKLDMRVA…SGVTAGMQVK (103 aa).

The protein belongs to the class-I aminoacyl-tRNA synthetase family. MetG type 1 subfamily. Homodimer. The cofactor is Zn(2+).

It localises to the cytoplasm. The enzyme catalyses tRNA(Met) + L-methionine + ATP = L-methionyl-tRNA(Met) + AMP + diphosphate. Functionally, is required not only for elongation of protein synthesis but also for the initiation of all mRNA translation through initiator tRNA(fMet) aminoacylation. In Haemophilus influenzae (strain ATCC 51907 / DSM 11121 / KW20 / Rd), this protein is Methionine--tRNA ligase.